A 78-amino-acid polypeptide reads, in one-letter code: Large ribosomal subunit protein bL28 (78 aa).

Belongs to the bacterial ribosomal protein bL28 family.

The chain is Large ribosomal subunit protein bL28 from Acidithiobacillus ferrooxidans (strain ATCC 23270 / DSM 14882 / CIP 104768 / NCIMB 8455) (Ferrobacillus ferrooxidans (strain ATCC 23270)).